Consider the following 175-residue polypeptide: Pancreatic beta cell growth factor (175 aa).

An N-terminal signal peptide occupies residues 1 to 26 (MMLPMTLCRMSWMLLSCLMFLSWVEG). The C-type lectin domain occupies 38 to 175 (ITCPQGSVAY…ELPYICKFKV (138 aa)). 3 disulfide bridges follow: cysteine 40–cysteine 51, cysteine 68–cysteine 171, and cysteine 146–cysteine 163.

In terms of tissue distribution, expressed only in CW animals pancreas and to a lesser extent in duodenum. In pancreas it is found in acinar cells, but not in islets.

The protein localises to the secreted. Functionally, constituent of ilotropin, which is a partially purified preparation of cellophane wrapping (CW) pancreata. Capable of initiating duct cell proliferation, a prerequisite for islet neogenesis. In Mesocricetus auratus (Golden hamster), this protein is Pancreatic beta cell growth factor (INGAP).